The primary structure comprises 103 residues: Large ribosomal subunit protein uL24 (103 aa).

It belongs to the universal ribosomal protein uL24 family. In terms of assembly, part of the 50S ribosomal subunit.

In terms of biological role, one of two assembly initiator proteins, it binds directly to the 5'-end of the 23S rRNA, where it nucleates assembly of the 50S subunit. Its function is as follows. One of the proteins that surrounds the polypeptide exit tunnel on the outside of the subunit. This Syntrophomonas wolfei subsp. wolfei (strain DSM 2245B / Goettingen) protein is Large ribosomal subunit protein uL24.